Consider the following 215-residue polypeptide: Ribose-5-phosphate isomerase A (215 aa).

Substrate is bound by residues 26–29, 79–82, and 92–95; these read TGST, DGAD, and KGGG. Catalysis depends on E101, which acts as the Proton acceptor. Residue K119 coordinates substrate.

This sequence belongs to the ribose 5-phosphate isomerase family. As to quaternary structure, homodimer.

The catalysed reaction is aldehydo-D-ribose 5-phosphate = D-ribulose 5-phosphate. It functions in the pathway carbohydrate degradation; pentose phosphate pathway; D-ribose 5-phosphate from D-ribulose 5-phosphate (non-oxidative stage): step 1/1. Functionally, catalyzes the reversible conversion of ribose-5-phosphate to ribulose 5-phosphate. The polypeptide is Ribose-5-phosphate isomerase A (Xanthomonas euvesicatoria pv. vesicatoria (strain 85-10) (Xanthomonas campestris pv. vesicatoria)).